The sequence spans 465 residues: Fujikurins efflux protein FFUJ_12242 (465 aa).

Residues 1–66 (MATNVGGAVD…AAKAHDEGPP (66 aa)) are disordered. Basic and acidic residues predominate over residues 11–28 (NSRRSISDNRHDPEKPAE). A run of 7 helical transmembrane segments spans residues 70–90 (TAAW…PGWI), 115–135 (WIPS…GIIF), 142–162 (PLII…SLAK), 175–195 (SAIG…TWFL), 200–220 (AAMG…PIMI), 231–251 (WALR…CLTV), and 274–294 (PAFA…YIPI). Asn-310 carries N-linked (GlcNAc...) asparagine glycosylation. Helical transmembrane passes span 314-334 (YLVA…GYGA), 342-362 (MFII…IPAT), 368-388 (IGYA…VGAL), 404-424 (IVFL…GAIL), and 430-450 (GWVS…AIIL).

This sequence belongs to the major facilitator superfamily. Monocarboxylate porter (TC 2.A.1.13) family.

It localises to the cell membrane. Functionally, efflux pump that may be involved in the secretion of fujikurins. This is Fujikurins efflux protein FFUJ_12242 from Gibberella fujikuroi (strain CBS 195.34 / IMI 58289 / NRRL A-6831) (Bakanae and foot rot disease fungus).